The following is a 661-amino-acid chain: UvrABC system protein B (661 aa).

The region spanning 25-182 is the Helicase ATP-binding domain; that stretch reads KGLNNKKRSQ…NDLVNLQYER (158 aa). Residue 38–45 participates in ATP binding; sequence GITGSGKT. Residues 91 to 114 carry the Beta-hairpin motif; the sequence is YYDYYQPEAYIPKTDVFIEKDSSI. The 163-residue stretch at 430-592 folds into the Helicase C-terminal domain; that stretch reads QVEDLVGEIQ…IIPKTINRTI (163 aa). The 36-residue stretch at 621 to 656 folds into the UVR domain; sequence KAHIDKLRKEMLKAASNLEFEQAAKLRDQLKTLEEA.

The protein belongs to the UvrB family. As to quaternary structure, forms a heterotetramer with UvrA during the search for lesions. Interacts with UvrC in an incision complex.

The protein localises to the cytoplasm. In terms of biological role, the UvrABC repair system catalyzes the recognition and processing of DNA lesions. A damage recognition complex composed of 2 UvrA and 2 UvrB subunits scans DNA for abnormalities. Upon binding of the UvrA(2)B(2) complex to a putative damaged site, the DNA wraps around one UvrB monomer. DNA wrap is dependent on ATP binding by UvrB and probably causes local melting of the DNA helix, facilitating insertion of UvrB beta-hairpin between the DNA strands. Then UvrB probes one DNA strand for the presence of a lesion. If a lesion is found the UvrA subunits dissociate and the UvrB-DNA preincision complex is formed. This complex is subsequently bound by UvrC and the second UvrB is released. If no lesion is found, the DNA wraps around the other UvrB subunit that will check the other stand for damage. The polypeptide is UvrABC system protein B (Rickettsia bellii (strain RML369-C)).